The primary structure comprises 520 residues: GMP synthase [glutamine-hydrolyzing] (520 aa).

Residues 13-205 (KIIVLDYGSQ…ALNICKAKGD (193 aa)) enclose the Glutamine amidotransferase type-1 domain. The Nucleophile role is filled by Cys90. Catalysis depends on residues His179 and Glu181. In terms of domain architecture, GMPS ATP-PPase spans 206–395 (WSMDNFIDMQ…LGMPDHIVWR (190 aa)). ATP is bound at residue 233 to 239 (SGGVDSS).

In terms of assembly, homodimer.

It catalyses the reaction XMP + L-glutamine + ATP + H2O = GMP + L-glutamate + AMP + diphosphate + 2 H(+). Its pathway is purine metabolism; GMP biosynthesis; GMP from XMP (L-Gln route): step 1/1. In terms of biological role, catalyzes the synthesis of GMP from XMP. This chain is GMP synthase [glutamine-hydrolyzing], found in Streptococcus pneumoniae (strain CGSP14).